Reading from the N-terminus, the 546-residue chain is Branchpoint-bridging protein (546 aa).

2 disordered regions span residues 1–141 (MWRP…ASAK) and 178–199 (TGDV…YDAY). A compositionally biased stretch (basic and acidic residues) spans 50-128 (RQERERDARD…DRGDSNEDGP (79 aa)). Residues 251 to 330 (YIPVKEFPEI…SKVKTCVALI (80 aa)) form the KH domain. 2 consecutive CCHC-type zinc fingers follow at residues 368–385 (QLCQ…ECPQ) and 393–410 (VICR…DCRG).

Belongs to the BBP/SF1 family.

It localises to the nucleus. In terms of biological role, necessary for the splicing of pre-mRNA. Has a role in the recognition of the branch site (5'-UACUAAC-3'), the pyrimidine tract and the 3'-splice site at the 3'-end of introns. This is Branchpoint-bridging protein (BBP) from Cryptococcus neoformans var. neoformans serotype D (strain B-3501A) (Filobasidiella neoformans).